Reading from the N-terminus, the 458-residue chain is Bifunctional protein GlmU (458 aa).

The interval Met1–Arg230 is pyrophosphorylase. UDP-N-acetyl-alpha-D-glucosamine is bound by residues Leu9–Gly12, Lys23, Gln73, and Gly78–Thr79. Asp103 serves as a coordination point for Mg(2+). The UDP-N-acetyl-alpha-D-glucosamine site is built by Gly140, Glu155, Asn170, and Asn228. Asn228 is a binding site for Mg(2+). The linker stretch occupies residues Val231–Asn251. Residues Gly252–Asp458 are N-acetyltransferase. 2 residues coordinate UDP-N-acetyl-alpha-D-glucosamine: Arg333 and Lys351. His363 serves as the catalytic Proton acceptor. The UDP-N-acetyl-alpha-D-glucosamine site is built by Tyr366 and Asn377. Residues Asn386–Tyr387, Ser405, Ala423, and Arg440 each bind acetyl-CoA.

It in the N-terminal section; belongs to the N-acetylglucosamine-1-phosphate uridyltransferase family. The protein in the C-terminal section; belongs to the transferase hexapeptide repeat family. In terms of assembly, homotrimer. The cofactor is Mg(2+).

The protein localises to the cytoplasm. It catalyses the reaction alpha-D-glucosamine 1-phosphate + acetyl-CoA = N-acetyl-alpha-D-glucosamine 1-phosphate + CoA + H(+). The enzyme catalyses N-acetyl-alpha-D-glucosamine 1-phosphate + UTP + H(+) = UDP-N-acetyl-alpha-D-glucosamine + diphosphate. Its pathway is nucleotide-sugar biosynthesis; UDP-N-acetyl-alpha-D-glucosamine biosynthesis; N-acetyl-alpha-D-glucosamine 1-phosphate from alpha-D-glucosamine 6-phosphate (route II): step 2/2. The protein operates within nucleotide-sugar biosynthesis; UDP-N-acetyl-alpha-D-glucosamine biosynthesis; UDP-N-acetyl-alpha-D-glucosamine from N-acetyl-alpha-D-glucosamine 1-phosphate: step 1/1. It participates in bacterial outer membrane biogenesis; LPS lipid A biosynthesis. Catalyzes the last two sequential reactions in the de novo biosynthetic pathway for UDP-N-acetylglucosamine (UDP-GlcNAc). The C-terminal domain catalyzes the transfer of acetyl group from acetyl coenzyme A to glucosamine-1-phosphate (GlcN-1-P) to produce N-acetylglucosamine-1-phosphate (GlcNAc-1-P), which is converted into UDP-GlcNAc by the transfer of uridine 5-monophosphate (from uridine 5-triphosphate), a reaction catalyzed by the N-terminal domain. This chain is Bifunctional protein GlmU, found in Enterococcus faecalis (strain ATCC 700802 / V583).